Consider the following 313-residue polypeptide: 4-diphosphocytidyl-2-C-methyl-D-erythritol kinase (313 aa).

The active site involves K11. ATP is bound at residue 99–109 (PVAAGLAGGST). Residue D141 is part of the active site.

The protein belongs to the GHMP kinase family. IspE subfamily.

The enzyme catalyses 4-CDP-2-C-methyl-D-erythritol + ATP = 4-CDP-2-C-methyl-D-erythritol 2-phosphate + ADP + H(+). The protein operates within isoprenoid biosynthesis; isopentenyl diphosphate biosynthesis via DXP pathway; isopentenyl diphosphate from 1-deoxy-D-xylulose 5-phosphate: step 3/6. In terms of biological role, catalyzes the phosphorylation of the position 2 hydroxy group of 4-diphosphocytidyl-2C-methyl-D-erythritol. This Microcystis aeruginosa (strain NIES-843 / IAM M-2473) protein is 4-diphosphocytidyl-2-C-methyl-D-erythritol kinase.